The chain runs to 741 residues: Homeobox protein AHox1 (741 aa).

Disordered regions lie at residues 1–30 (MEKM…KSSS), 61–96 (KRRL…NFCR), 146–183 (VNPL…KSCC), 203–226 (ADSD…INQD), 357–383 (KTEE…PIRT), 476–501 (FDFP…NPQT), and 616–642 (QYGH…GTVK). Over residues 7 to 19 (KSVSPVPFNNSNN) the composition is skewed to low complexity. Positions 63–78 (RLLDPQNKKKQNRFER) are enriched in basic and acidic residues. The span at 79–92 (YSSSNHAQEQSSEE) shows a compositional bias: polar residues. A compositionally biased stretch (low complexity) spans 169 to 181 (SFSSSSEASDSKS). The span at 363–375 (RSPSETKQYSPDA) shows a compositional bias: polar residues. The span at 616–629 (QYGHMSSSQNPHSE) shows a compositional bias: polar residues. Over residues 630 to 639 (TQNRSEEVRG) the composition is skewed to basic and acidic residues. The segment at residues 645-704 (RKWNRAVFSLMQRRGLEKSFQSQKYVAKPERRKLADALSLTDAQVKIWFQNRRMKWRQEI) is a DNA-binding region (homeobox). The disordered stretch occupies residues 722 to 741 (EIEKEKTQTPSDEGEVINVD).

It belongs to the H2.0 homeobox family. Expressed in the tissues of endodermal origin.

It is found in the nucleus. This chain is Homeobox protein AHox1 (AHOX1), found in Halocynthia roretzi (Sea squirt).